A 401-amino-acid polypeptide reads, in one-letter code: tRNA pseudouridine synthase Pus10 (401 aa).

Positions 64-195 constitute a THUMP domain; the sequence is ALAKSGHRES…DGSVSVEVMP (132 aa).

The protein belongs to the pseudouridine synthase Pus10 family.

It catalyses the reaction uridine(54) in tRNA = pseudouridine(54) in tRNA. It carries out the reaction uridine(55) in tRNA = pseudouridine(55) in tRNA. Its function is as follows. Responsible for synthesis of pseudouridine from uracil-54 and uracil-55 in the psi GC loop of transfer RNAs. The protein is tRNA pseudouridine synthase Pus10 of Caldivirga maquilingensis (strain ATCC 700844 / DSM 13496 / JCM 10307 / IC-167).